Consider the following 124-residue polypeptide: Small ribosomal subunit protein uS13 (124 aa).

The disordered stretch occupies residues 95-124 (GLPVRGQRTKTNARTRKGPKRTVAGKKKAR).

Belongs to the universal ribosomal protein uS13 family. Part of the 30S ribosomal subunit. Forms a loose heterodimer with protein S19. Forms two bridges to the 50S subunit in the 70S ribosome.

Located at the top of the head of the 30S subunit, it contacts several helices of the 16S rRNA. In the 70S ribosome it contacts the 23S rRNA (bridge B1a) and protein L5 of the 50S subunit (bridge B1b), connecting the 2 subunits; these bridges are implicated in subunit movement. Contacts the tRNAs in the A and P-sites. The sequence is that of Small ribosomal subunit protein uS13 from Leifsonia xyli subsp. xyli (strain CTCB07).